The following is a 498-amino-acid chain: Probable dipeptidase B (498 aa).

The active site involves cysteine 26.

This sequence belongs to the peptidase C69 family.

The enzyme catalyses an L-aminoacyl-L-amino acid + H2O = 2 an L-alpha-amino acid. This Streptococcus pyogenes serotype M1 protein is Probable dipeptidase B (pepDB).